A 275-amino-acid chain; its full sequence is Sulfate transporter CysZ (275 aa).

Residues 1–24 (MSSEKSSFPEKPPSFEKPSHSNTA) are disordered. The segment covering 13–24 (PSFEKPSHSNTA) has biased composition (basic and acidic residues). A run of 4 helical transmembrane segments spans residues 49 to 69 (FVIL…WWLF), 93 to 113 (LIWP…FSTI), 169 to 189 (IVLL…PVLW), and 232 to 252 (ALVS…PVAV).

The protein belongs to the CysZ family.

Its subcellular location is the cell inner membrane. Functionally, high affinity, high specificity proton-dependent sulfate transporter, which mediates sulfate uptake. Provides the sulfur source for the cysteine synthesis pathway. In Pectobacterium atrosepticum (strain SCRI 1043 / ATCC BAA-672) (Erwinia carotovora subsp. atroseptica), this protein is Sulfate transporter CysZ.